Consider the following 220-residue polypeptide: uncharacterized protein (220 aa).

The stretch at 165–202 (DKYEDLISDYNKIMEKYREVIKSEIEKYKALSKRKNDI) forms a coiled coil.

This is an uncharacterized protein from Pasteurella multocida (strain Pm70).